Reading from the N-terminus, the 259-residue chain is Beta-glucanase (259 aa).

The N-terminal stretch at 1–31 is a signal peptide; that stretch reads MVKSKYLVFISVFSLLFGVFVVGFSHQGVKA. The 221-residue stretch at 35–255 folds into the GH16 domain; it reads RPMGTAFYES…WVRYTPLQNY (221 aa). The active-site Nucleophile is E142. Residue E146 is the Proton donor of the active site.

Belongs to the glycosyl hydrolase 16 family.

The enzyme catalyses Hydrolysis of (1-&gt;4)-beta-D-glucosidic linkages in beta-D-glucans containing (1-&gt;3)- and (1-&gt;4)-bonds.. Its function is as follows. Hydrolyzes B-glucans containing mixed beta-1,3 and beta-1,4 linkages. The sequence is that of Beta-glucanase (bglBB) from Brevibacillus brevis (Bacillus brevis).